The primary structure comprises 716 residues: Segment polarity protein dishevelled homolog DVL-3 (716 aa).

Residues 1 to 82 enclose the DIX domain; the sequence is MGETKIIYHL…RVVSWLVSAE (82 aa). R27 is subject to Omega-N-methylarginine. Phosphoserine is present on residues S48 and S125. The tract at residues 85–235 is disordered; sequence HPEPAPFCAD…VSRIERSSSF (151 aa). Positions 142-156 are enriched in basic and acidic residues; sequence QRERPRRRDGPEHAA. The span at 175–190 shows a compositional bias: low complexity; it reads SSSTLMSSELETTSFF. S192 is modified (phosphoserine). Residues 199–212 are compositionally biased toward low complexity; that stretch reads SRFSSSTEQSSASR. R212 is modified (omega-N-methylarginine). The span at 213–226 shows a compositional bias: basic residues; sequence LMRRHKRRRRKQKV. A PDZ domain is found at 249 to 321; it reads TVTLNMEKYN…NDDAVRVLRE (73 aa). At R271 the chain carries Asymmetric dimethylarginine; by PRMT1; alternate. Symmetric dimethylarginine; by PRMT7; alternate occurs at positions 271 and 342. R342 is subject to Omega-N-methylarginine; alternate. Position 346 is a phosphothreonine (T346). Residues 422 to 496 enclose the DEP domain; that stretch reads PESGLEVRDR…SEQCYYIFGD (75 aa). The segment at 546-691 is disordered; sequence PYNPHPGFPE…PPGRDLASVP (146 aa). Over residues 565–581 the composition is skewed to low complexity; that stretch reads ASSQHSEGSRSSGSNRS. 2 stretches are compositionally biased toward basic and acidic residues: residues 582–595 and 604–622; these read GSDR…KAGD and ESDH…RAPS. Position 614 is a symmetric dimethylarginine; by PRMT7 (R614). 2 stretches are compositionally biased toward pro residues: residues 653-663 and 670-682; these read YGPPGVPPLYG and TPPP…PGAP. At S697 the chain carries Phosphoserine. R698 bears the Omega-N-methylarginine; alternate mark. A Dimethylated arginine; alternate modification is found at R698. S700 bears the Phosphoserine mark.

Belongs to the DSH family. In terms of assembly, interacts (via the PDZ domain) with the C-terminal regions of VANGL1 and VANGL2. Interacts (via the region containing both the PDZ and DEP domains) with LRRFIP2; the DIX domain may inhibit this interaction. Interacts with CYLD. Interacts with CEP164 and DAB2. Interacts with DCDC2. Interacts with FOXK1 and FOXK2. Interacts with DAAM2. Post-translationally, ubiquitinated. Deubiquitinated by CYLD, which acts on 'Lys-63'-linked ubiquitin chains. In terms of processing, phosphorylated by CSNK1D. Arginine methylation may function as a switch in regulation of function in Wnt signaling. Ubiquitous.

Its subcellular location is the cytoplasm. Functionally, involved in the signal transduction pathway mediated by multiple Wnt genes. The protein is Segment polarity protein dishevelled homolog DVL-3 (Dvl3) of Mus musculus (Mouse).